The chain runs to 289 residues: 2-dehydro-3-deoxyphosphooctonate aldolase (289 aa).

The protein belongs to the KdsA family.

Its subcellular location is the cytoplasm. The enzyme catalyses D-arabinose 5-phosphate + phosphoenolpyruvate + H2O = 3-deoxy-alpha-D-manno-2-octulosonate-8-phosphate + phosphate. It participates in carbohydrate biosynthesis; 3-deoxy-D-manno-octulosonate biosynthesis; 3-deoxy-D-manno-octulosonate from D-ribulose 5-phosphate: step 2/3. The protein operates within bacterial outer membrane biogenesis; lipopolysaccharide biosynthesis. The polypeptide is 2-dehydro-3-deoxyphosphooctonate aldolase (Cupriavidus taiwanensis (strain DSM 17343 / BCRC 17206 / CCUG 44338 / CIP 107171 / LMG 19424 / R1) (Ralstonia taiwanensis (strain LMG 19424))).